Here is a 418-residue protein sequence, read N- to C-terminus: Putative ion-transport protein YfeO (418 aa).

A run of 10 helical transmembrane segments spans residues 15 to 37 (PAVA…ASVL), 57 to 79 (LWII…FSQG), 99 to 118 (ALPR…VSLG), 149 to 171 (ILAS…LIFS), 186 to 208 (LFAP…HPHF), 221 to 243 (TDIL…AVWC), 258 to 280 (VLVL…PVSL), 301 to 323 (YFLL…FRGG), 343 to 363 (VPAV…VLVV), and 376 to 398 (VVVP…WLLL).

Belongs to the chloride channel (TC 2.A.49) family.

The protein localises to the cell membrane. The polypeptide is Putative ion-transport protein YfeO (yfeO) (Shigella flexneri).